We begin with the raw amino-acid sequence, 149 residues long: Epoxide hydrolase EphG (149 aa).

Aspartate 93 (proton donor) is an active-site residue. Catalysis depends on aspartate 122, which acts as the Proton acceptor.

It belongs to the limonene-1,2-epoxide hydrolase family. As to quaternary structure, homodimer. Is also present as monomer in solution.

The catalysed reaction is an epoxide + H2O = an ethanediol. It catalyses the reaction 5,6alpha-epoxy-5alpha-cholestan-3beta-ol + H2O = 5alpha-cholestane-3beta,5,6beta-triol. It carries out the reaction 5,6beta-epoxy-5beta-cholestan-3beta-ol + H2O = 5alpha-cholestane-3beta,5,6beta-triol. Is inhibited by the anti-epileptic drug valpromide (Ki value of about 100 uM). In terms of biological role, epoxide hydrolase capable of hydrolyzing long or bulky lipophilic epoxides such as 9,10-epoxystearic acid and cholesterol 5,6-oxide in vitro. The physiological substrates have yet to be identified, but could be fatty acid or steroid derivatives. The protein is Epoxide hydrolase EphG (ephG) of Mycobacterium tuberculosis (strain ATCC 25618 / H37Rv).